Reading from the N-terminus, the 78-residue chain is Small ribosomal subunit protein bS18 (78 aa).

Belongs to the bacterial ribosomal protein bS18 family. In terms of assembly, part of the 30S ribosomal subunit. Forms a tight heterodimer with protein bS6.

Its function is as follows. Binds as a heterodimer with protein bS6 to the central domain of the 16S rRNA, where it helps stabilize the platform of the 30S subunit. This is Small ribosomal subunit protein bS18 from Kocuria rhizophila (strain ATCC 9341 / DSM 348 / NBRC 103217 / DC2201).